A 912-amino-acid polypeptide reads, in one-letter code: MDDFNLRSENPNSSSTTSSSSSSFHRHKSETGNTKRSRSTSTLSTDPQSVAARDRRHRISDRFKILQSMVPGGAKMDTVSMLDEAISYVKFLKAQIWYHQNMLLFINDHETTSSCTYSPGAGEFGPKLFGYDDDYAPIMDTYSQGVPLTVADSKYTPWFGSVDDEQEHVTYFKYRRATRHALRGHCNCIIGETEEFADQREKMEVQIEESGKNQTSPESIEADKAKQIVVLLIGPPGSGKSTFCDTAMRSSHRPWSRICQDIVNNGKAGTKAQCLKMATDSLREGKSVFIDRCNLDREQRSEFIKLGGPEFEVHAVVLELPAQVCISRSVKRTGHEGNLQGGRAAAVVNKMLQSKELPKVNEGFSRIMFCYSDADVDNAVNMYNKLGPMDTLPSGCFGEKKLDTKSQPGIMKFFKKVSALPASSSNEATNTTRKADEMTANVRVSPVKLGSADIVPTLAFPSISTADFQFDLEKASDIIVEKAEEFLSKLGTARLVLVDLSRGSKILSLVKAKASQKNIDSAKFFTFVGDITKLRSEGGLHCNVIANATNWRLKPGGGGVNAAIFKAAGPDLETATRVRANTLLPGKAVVVPLPSTCPLHNAEGITHVIHVLGPNMNPNRPDNLNNDYTKGCKTLREAYTSLFEGFLSVVQDQSKLPKRSSQTAVSDSGEDIKEDSERNKKYKGSQDKAVTNNLESESLEDTRGSGKKMSKGWNTWALALHSIAMHPERHENVVLEYLDNIVVINDQYPKARKHVLVLARQESLDGLEDVRKENLQLLQEMHNVGLKWVDRFQNEDASLIFRLGYHSVPSMRQLHLHVISQDFNSDSLKNKKHWNSFTTSFFRDSVDVLEEVNSQGKANVASEDLLKGELRCNRCRSAHPNIPKLKSHVRSCHSQFPDHLLQNNRLVARAET.

Positions 1-57 are disordered; the sequence is MDDFNLRSENPNSSSTTSSSSSSFHRHKSETGNTKRSRSTSTLSTDPQSVAARDRRH. Low complexity predominate over residues 13-23; sequence SSSTTSSSSSS. Residues 43–92 form the bHLH domain; that stretch reads LSTDPQSVAARDRRHRISDRFKILQSMVPGGAKMDTVSMLDEAISYVKFL. 234–241 is an ATP binding site; that stretch reads GPPGSGKS. The 180-residue stretch at 511–690 folds into the Macro domain; it reads KAKASQKNID…KYKGSQDKAV (180 aa). Residues 657-666 show a composition bias toward polar residues; it reads PKRSSQTAVS. Positions 657 to 706 are disordered; it reads PKRSSQTAVSDSGEDIKEDSERNKKYKGSQDKAVTNNLESESLEDTRGSG. The region spanning 720-829 is the HIT domain; it reads LHSIAMHPER…SQDFNSDSLK (110 aa). The C2H2-type zinc finger occupies 870 to 893; sequence LRCNRCRSAHPNIPKLKSHVRSCH.

In terms of assembly, homodimer.

The protein localises to the nucleus. The chain is Transcription factor bHLH140 (BHLH140) from Arabidopsis thaliana (Mouse-ear cress).